Here is a 657-residue protein sequence, read N- to C-terminus: Penicillin-binding protein activator LpoA (657 aa).

Residues 1-25 (MLSSTFVRSKAGLVPVILAALILAA) form the signal peptide. Cys26 is lipidated: N-palmitoyl cysteine. Cys26 is lipidated: S-diacylglycerol cysteine.

Belongs to the LpoA family. Interacts with PBP1a.

Its subcellular location is the cell outer membrane. In terms of biological role, regulator of peptidoglycan synthesis that is essential for the function of penicillin-binding protein 1A (PBP1a). The sequence is that of Penicillin-binding protein activator LpoA from Yersinia pseudotuberculosis serotype O:1b (strain IP 31758).